The sequence spans 406 residues: Tryptophan 2,3-dioxygenase (406 aa).

Substrate-binding positions include 72-76 (FIITH) and Arg-144. His-328 lines the heme pocket. Thr-342 provides a ligand contact to substrate.

This sequence belongs to the tryptophan 2,3-dioxygenase family. In terms of assembly, homotetramer. Dimer of dimers. Heme serves as cofactor.

It carries out the reaction L-tryptophan + O2 = N-formyl-L-kynurenine. Its pathway is amino-acid degradation; L-tryptophan degradation via kynurenine pathway; L-kynurenine from L-tryptophan: step 1/2. Heme-dependent dioxygenase that catalyzes the oxidative cleavage of the L-tryptophan (L-Trp) pyrrole ring and converts L-tryptophan to N-formyl-L-kynurenine. Catalyzes the oxidative cleavage of the indole moiety. The sequence is that of Tryptophan 2,3-dioxygenase from Homo sapiens (Human).